Reading from the N-terminus, the 156-residue chain is ATP synthase subunit b (156 aa).

Residues 7–29 (LFAQMVVFLVLAWFTMKFVWPPL) traverse the membrane as a helical segment.

This sequence belongs to the ATPase B chain family. In terms of assembly, F-type ATPases have 2 components, F(1) - the catalytic core - and F(0) - the membrane proton channel. F(1) has five subunits: alpha(3), beta(3), gamma(1), delta(1), epsilon(1). F(0) has three main subunits: a(1), b(2) and c(10-14). The alpha and beta chains form an alternating ring which encloses part of the gamma chain. F(1) is attached to F(0) by a central stalk formed by the gamma and epsilon chains, while a peripheral stalk is formed by the delta and b chains.

The protein resides in the cell inner membrane. Its function is as follows. F(1)F(0) ATP synthase produces ATP from ADP in the presence of a proton or sodium gradient. F-type ATPases consist of two structural domains, F(1) containing the extramembraneous catalytic core and F(0) containing the membrane proton channel, linked together by a central stalk and a peripheral stalk. During catalysis, ATP synthesis in the catalytic domain of F(1) is coupled via a rotary mechanism of the central stalk subunits to proton translocation. Functionally, component of the F(0) channel, it forms part of the peripheral stalk, linking F(1) to F(0). In Burkholderia cenocepacia (strain ATCC BAA-245 / DSM 16553 / LMG 16656 / NCTC 13227 / J2315 / CF5610) (Burkholderia cepacia (strain J2315)), this protein is ATP synthase subunit b.